We begin with the raw amino-acid sequence, 673 residues long: MNLLPKTREEFAQTDYWNEFFKKRGEKAFEWYGEYLDLCDHIHKYIKPVDKILMLGCGNSKLSMDMYDSEYRDITNIDISPVAVKKMLEQNARTRPDMKFLQMDATAMTFPDESFSVALDKGTLDALFVDDAPETKAVVENYFKEILRTMRNGGRYFCVSLLQEHILNFLVEFLPRHNCMLRIVHCLGVEQANKEKNADDAMKMPVFVVIATKFKSLPMPILEFGLGNDKMQRFTESSELSNAVRSVQKAALVFNGLARSSIAGHDEVTLDLYRPSENTPRYSIYILDQAAARGLNKYAAFIVPQGREIEWLFGTPSGRKKLQASAKFQRLAVVTLHRDQVYNTLEEVQAELGDTVFSLAPHGHIKQIPYLSLGSDVGKRETLISGFSKISGEFRIEEVEAGGKTLRRLIFLSNQFVVQSEALVKTIKIKGKKERKKIDFGYLACQHHLYMSVGVQLATTLQNPKKDVQKDVLVIGLGGGGLCSFLHAALPQSRITAVEIDPIMLEVAEQYFELKQDKRFHVVIDDGLAFVERCRNEDIHFDAVLFDVDSKDLSLGMSCPPQGFLAHDVLLHIKEIIGPKGLFMLNLVCRDETLKTEAIANLQKVFPAVCSYKLEEDINEVVYCANDEKYKTVEHWQKAMGTAGRGLNTTIKEHKLASEDPLEVAEFLSELKL.

Belongs to the methyltransferase superfamily.

It catalyses the reaction L-lysyl-[protein] + S-adenosyl-L-methionine = N(6)-methyl-L-lysyl-[protein] + S-adenosyl-L-homocysteine + H(+). It carries out the reaction N(6)-methyl-L-lysyl-[protein] + S-adenosyl-L-methionine = N(6),N(6)-dimethyl-L-lysyl-[protein] + S-adenosyl-L-homocysteine + H(+). The catalysed reaction is N-terminal glycyl-L-lysyl-L-glutamyl-[protein] + 3 S-adenosyl-L-methionine = N-terminal N,N,N-trimethyl-glycyl-L-lysyl-L-glutamyl-[protein] + 3 S-adenosyl-L-homocysteine + 3 H(+). Functionally, dual methyltransferase. It catalyzes N-terminal methylation of target proteins via its C-terminus. It catalyzes dimethylation on lysine residues of target proteins via its N-terminus. This Drosophila pseudoobscura pseudoobscura (Fruit fly) protein is eEF1A lysine and N-terminal methyltransferase homolog.